A 261-amino-acid chain; its full sequence is WW domain-binding protein 2 (261 aa).

The 84-residue stretch at 1 to 84 folds into the GRAM domain; it reads MALNKNHSEG…YLMKDCEIKQ (84 aa). Position 192 is a phosphotyrosine; by YES and SRC (Y192). Positions 196-200 match the PPxY motif 1 motif; the sequence is PPPPY. A compositionally biased stretch (pro residues) spans 196-209; sequence PPPPYPGPMEPPVS. The interval 196–261 is disordered; sequence PPPPYPGPME…YYPPEDKKTQ (66 aa). Over residues 218–230 the composition is skewed to low complexity; that stretch reads AAEAKAAEAAASA. Y231 carries the phosphotyrosine; by YES and SRC modification. Positions 245 to 254 are enriched in pro residues; that stretch reads SQPPPPPYYP. A PPxY motif 2 motif is present at residues 248–252; the sequence is PPPPY.

As to quaternary structure, binds to the WW domain of YAP1, WWP1 and WWP2. Interacts with NEDD4. Interacts with ESR1 and UBE3A. In terms of processing, phosphorylated in repsonse to EGF as well as estrogen and progesterone hormones. Tyr-192 and Tyr-231 are phosphorylated by YES and SRC inducing nuclear translocation. Ubiquitous.

The protein localises to the cytoplasm. Its subcellular location is the nucleus. Functionally, acts as a transcriptional coactivator of estrogen and progesterone receptors (ESR1 and PGR) upon hormone activation. In presence of estrogen, binds to ESR1-responsive promoters. Synergizes with YAP1 to enhance PGR activity. Modulates expression of post-synaptic scaffolding proteins via regulation of ESR1, ESR2 and PGR. The chain is WW domain-binding protein 2 from Homo sapiens (Human).